Here is a 284-residue protein sequence, read N- to C-terminus: 4-diphosphocytidyl-2-C-methyl-D-erythritol kinase (284 aa).

K14 is a catalytic residue. 98–108 (PMGGGLGGGSS) lines the ATP pocket. The active site involves D140.

This sequence belongs to the GHMP kinase family. IspE subfamily.

It catalyses the reaction 4-CDP-2-C-methyl-D-erythritol + ATP = 4-CDP-2-C-methyl-D-erythritol 2-phosphate + ADP + H(+). It functions in the pathway isoprenoid biosynthesis; isopentenyl diphosphate biosynthesis via DXP pathway; isopentenyl diphosphate from 1-deoxy-D-xylulose 5-phosphate: step 3/6. Catalyzes the phosphorylation of the position 2 hydroxy group of 4-diphosphocytidyl-2C-methyl-D-erythritol. This Shewanella halifaxensis (strain HAW-EB4) protein is 4-diphosphocytidyl-2-C-methyl-D-erythritol kinase.